A 242-amino-acid polypeptide reads, in one-letter code: Murein peptide amidase A (242 aa).

Positions 1 to 234 constitute a Peptidase M14 domain; sequence MTVTRPRAER…FAMANLLRWH (234 aa). Residues His-49, Glu-52, and His-157 each coordinate Zn(2+). Glu-210 serves as the catalytic Proton donor/acceptor.

Belongs to the peptidase M14 family. In terms of assembly, homodimer. Zn(2+) serves as cofactor.

The protein resides in the cytoplasm. The catalysed reaction is L-alanyl-gamma-D-glutamyl-meso-2,6-diaminopimelate + H2O = L-alanyl-D-glutamate + meso-2,6-diaminopimelate. Its pathway is cell wall degradation; peptidoglycan degradation. Its function is as follows. Involved in muropeptide degradation. Catalyzes the hydrolysis of the gamma-D-glutamyl-diaminopimelic acid (gamma-D-Glu-Dap) amide bond in the murein tripeptide L-alanyl-gamma-D-glutamyl-meso-diaminopimelic acid, leading to the formation of L-Ala-gamma-D-Glu and Dap. This Escherichia coli O157:H7 protein is Murein peptide amidase A.